Consider the following 344-residue polypeptide: GTP 3',8-cyclase (344 aa).

Positions 19–244 constitute a Radical SAM core domain; the sequence is PFARPITYLR…TPLAERTGGP (226 aa). Arg28 contacts GTP. Cys35 and Cys39 together coordinate [4Fe-4S] cluster. Position 41 (Tyr41) interacts with S-adenosyl-L-methionine. Cys42 provides a ligand contact to [4Fe-4S] cluster. Arg77 is a GTP binding site. Gly81 is a binding site for S-adenosyl-L-methionine. Thr110 is a GTP binding site. Ser134 contributes to the S-adenosyl-L-methionine binding site. Lys170 serves as a coordination point for GTP. Residue Met204 participates in S-adenosyl-L-methionine binding. Residues Cys268 and Cys271 each coordinate [4Fe-4S] cluster. Residue 273 to 275 participates in GTP binding; sequence RVR. Cys285 contributes to the [4Fe-4S] cluster binding site.

This sequence belongs to the radical SAM superfamily. MoaA family. Monomer and homodimer. Requires [4Fe-4S] cluster as cofactor.

It carries out the reaction GTP + AH2 + S-adenosyl-L-methionine = (8S)-3',8-cyclo-7,8-dihydroguanosine 5'-triphosphate + 5'-deoxyadenosine + L-methionine + A + H(+). It participates in cofactor biosynthesis; molybdopterin biosynthesis. Catalyzes the cyclization of GTP to (8S)-3',8-cyclo-7,8-dihydroguanosine 5'-triphosphate. This Paracoccus denitrificans (strain Pd 1222) protein is GTP 3',8-cyclase.